The following is a 116-amino-acid chain: uncharacterized protein (116 aa).

3 helical membrane passes run 5-27 (AILLSLAGIADSSYLLLSEAVPC), 42-64 (PFVPALLGLCWFVLSIVVFTAGV), and 88-110 (VLHGYFCPYCFTAYGIGIVVVAI).

It localises to the cell membrane. This is an uncharacterized protein from Archaeoglobus fulgidus (strain ATCC 49558 / DSM 4304 / JCM 9628 / NBRC 100126 / VC-16).